A 389-amino-acid chain; its full sequence is Putative F-box protein At1g47790 (389 aa).

The region spanning 19-65 is the F-box domain; sequence SKPTSSFPLDLASEILLRLPVKSVVRFRCVSKLWSSIITDPYFIKTY.

The protein is Putative F-box protein At1g47790 of Arabidopsis thaliana (Mouse-ear cress).